Reading from the N-terminus, the 669-residue chain is DNA ligase (669 aa).

NAD(+)-binding positions include 35–39, 84–85, and E116; these read DSVYD and SL. K118 serves as the catalytic N6-AMP-lysine intermediate. 4 residues coordinate NAD(+): R139, E176, K291, and K315. Zn(2+) contacts are provided by C409, C412, C427, and C432. A BRCT domain is found at 591–669; sequence TTKATLAGKT…EAQLLELIKA (79 aa).

This sequence belongs to the NAD-dependent DNA ligase family. LigA subfamily. The cofactor is Mg(2+). Mn(2+) serves as cofactor.

The enzyme catalyses NAD(+) + (deoxyribonucleotide)n-3'-hydroxyl + 5'-phospho-(deoxyribonucleotide)m = (deoxyribonucleotide)n+m + AMP + beta-nicotinamide D-nucleotide.. DNA ligase that catalyzes the formation of phosphodiester linkages between 5'-phosphoryl and 3'-hydroxyl groups in double-stranded DNA using NAD as a coenzyme and as the energy source for the reaction. It is essential for DNA replication and repair of damaged DNA. This is DNA ligase from Microcystis aeruginosa (strain NIES-843 / IAM M-2473).